Here is a 355-residue protein sequence, read N- to C-terminus: Peptide chain release factor 1 (355 aa).

Gln233 is subject to N5-methylglutamine. Basic and acidic residues predominate over residues 280–293; the sequence is KRRQKEQERSDSRR. Residues 280-310 form a disordered region; that stretch reads KRRQKEQERSDSRRGQVGSGDRSERIRTYNF.

This sequence belongs to the prokaryotic/mitochondrial release factor family. In terms of processing, methylated by PrmC. Methylation increases the termination efficiency of RF1.

Its subcellular location is the cytoplasm. Functionally, peptide chain release factor 1 directs the termination of translation in response to the peptide chain termination codons UAG and UAA. The chain is Peptide chain release factor 1 (prfA) from Rickettsia prowazekii (strain Madrid E).